Consider the following 415-residue polypeptide: Krueppel-like factor 15 (415 aa).

The short motif at 75 to 83 (SILDFLLSR) is the 9aaTAD element. The segment at 172–216 (LSAGSHRSHLHPESAGRERCTPPPGGTSGGGAQSAGEGPAHDGPV) is disordered. The segment covering 181 to 191 (LHPESAGRERC) has biased composition (basic and acidic residues). 3 C2H2-type zinc fingers span residues 320–344 (HKCTFPGCSKMYTKSSHLKAHLRRH), 350–374 (FACTWPGCGWRFSRSDELSRHRRSH), and 380–402 (YQCPVCEKKFARSDHLSKHIKVH).

The protein belongs to the Sp1 C2H2-type zinc-finger protein family. As to quaternary structure, interacts with MYOCD. Interacts with EP300. In terms of tissue distribution, expressed in aortic smooth muscle cells.

The protein localises to the nucleus. In terms of biological role, transcriptional regulator that binds to the GA element of the CLCNKA promoter. Binds to the KCNIP2 promoter and regulates KCNIP2 circadian expression in the heart. Is a repressor of CCN2 expression, involved in the control of cardiac fibrosis. Is also involved in the control of cardiac hypertrophy acting through the inhibition of MEF2A, GATA4 and MYOCD activity. Is a negative regulator of TP53 acetylation. Inhibits NF-kappa-B activation through repression of EP300-dependent RELA acetylation. Involved in podocyte differentiation. The polypeptide is Krueppel-like factor 15 (Klf15) (Mus musculus (Mouse)).